The sequence spans 281 residues: Pantothenate synthetase (281 aa).

Position 30 to 37 (30 to 37 (MGALHHGH)) interacts with ATP. Histidine 37 (proton donor) is an active-site residue. Residue glutamine 61 participates in (R)-pantoate binding. Glutamine 61 is a beta-alanine binding site. 147-150 (GEKD) is an ATP binding site. Residue glutamine 153 participates in (R)-pantoate binding. ATP contacts are provided by residues leucine 176 and 184 to 187 (SSSR).

It belongs to the pantothenate synthetase family. As to quaternary structure, homodimer.

The protein resides in the cytoplasm. The enzyme catalyses (R)-pantoate + beta-alanine + ATP = (R)-pantothenate + AMP + diphosphate + H(+). It functions in the pathway cofactor biosynthesis; (R)-pantothenate biosynthesis; (R)-pantothenate from (R)-pantoate and beta-alanine: step 1/1. Catalyzes the condensation of pantoate with beta-alanine in an ATP-dependent reaction via a pantoyl-adenylate intermediate. The polypeptide is Pantothenate synthetase (Bartonella bacilliformis (strain ATCC 35685 / KC583 / Herrer 020/F12,63)).